A 478-amino-acid polypeptide reads, in one-letter code: V-type proton ATPase subunit H (478 aa).

This sequence belongs to the V-ATPase H subunit family. V-ATPase is a heteromultimeric enzyme composed of a peripheral catalytic V1 complex (components A to H) attached to an integral membrane V0 proton pore complex (components: a, c, c', c'', d, e, f and VOA1). Interacts with YND1.

It is found in the vacuole membrane. Subunit of the V1 complex of vacuolar(H+)-ATPase (V-ATPase), a multisubunit enzyme composed of a peripheral complex (V1) that hydrolyzes ATP and a membrane integral complex (V0) that translocates protons. V-ATPase is responsible for acidifying and maintaining the pH of intracellular compartments. This subunit is essential for activity, but not assembly, of the enzyme complex. This subunit is also required for silencing the ATPase activity of V-ATPase when V1 is detached from V0. In Saccharomyces cerevisiae (strain ATCC 204508 / S288c) (Baker's yeast), this protein is V-type proton ATPase subunit H.